We begin with the raw amino-acid sequence, 258 residues long: Protein UL24 homolog (258 aa).

Belongs to the herpesviridae UL24 family.

It is found in the virion. Its subcellular location is the host cytoplasm. The protein resides in the host nucleus. It localises to the host nucleolus. The protein localises to the host Golgi apparatus. May participate in nuclear egress of viral particles. Plays a role in the dispersal of several host nucleolar proteins including NCL/nucleolin and NPM1. Since deletion of host NCL/nucleolin negatively impact on nuclear egress, UL24 supposedly acts on this process through its effect on host nucleoli. The sequence is that of Protein UL24 homolog from Varicella-zoster virus (strain Dumas) (HHV-3).